Reading from the N-terminus, the 320-residue chain is tRNA dimethylallyltransferase (320 aa).

14-21 (GPTASGKT) contacts ATP. 16-21 (TASGKT) contributes to the substrate binding site. Interaction with substrate tRNA stretches follow at residues 39–42 (DSAL) and 163–167 (QRLQR).

This sequence belongs to the IPP transferase family. As to quaternary structure, monomer. Mg(2+) is required as a cofactor.

The enzyme catalyses adenosine(37) in tRNA + dimethylallyl diphosphate = N(6)-dimethylallyladenosine(37) in tRNA + diphosphate. Functionally, catalyzes the transfer of a dimethylallyl group onto the adenine at position 37 in tRNAs that read codons beginning with uridine, leading to the formation of N6-(dimethylallyl)adenosine (i(6)A). This chain is tRNA dimethylallyltransferase, found in Thioalkalivibrio sulfidiphilus (strain HL-EbGR7).